We begin with the raw amino-acid sequence, 1125 residues long: Probable inorganic carbon transporter subunit DabA (1125 aa).

Zn(2+) contacts are provided by cysteine 578, aspartate 580, histidine 769, and cysteine 784. A disordered region spans residues 1106–1125 (SDPRPPALVEPKQTETHHAA).

The protein belongs to the inorganic carbon transporter (TC 9.A.2) DabA family. In terms of assembly, forms a complex with DabB. Zn(2+) serves as cofactor.

It is found in the cell inner membrane. Part of an energy-coupled inorganic carbon pump. The sequence is that of Probable inorganic carbon transporter subunit DabA from Nitrosococcus oceani (strain ATCC 19707 / BCRC 17464 / JCM 30415 / NCIMB 11848 / C-107).